A 359-amino-acid chain; its full sequence is Chorismate synthase (359 aa).

Arg47 is an NADP(+) binding site. FMN-binding positions include 123-125 (RSS), Gly283, 298-302 (KPTSS), and Arg326.

It belongs to the chorismate synthase family. Homotetramer. FMNH2 serves as cofactor.

It carries out the reaction 5-O-(1-carboxyvinyl)-3-phosphoshikimate = chorismate + phosphate. Its pathway is metabolic intermediate biosynthesis; chorismate biosynthesis; chorismate from D-erythrose 4-phosphate and phosphoenolpyruvate: step 7/7. In terms of biological role, catalyzes the anti-1,4-elimination of the C-3 phosphate and the C-6 proR hydrogen from 5-enolpyruvylshikimate-3-phosphate (EPSP) to yield chorismate, which is the branch point compound that serves as the starting substrate for the three terminal pathways of aromatic amino acid biosynthesis. This reaction introduces a second double bond into the aromatic ring system. The sequence is that of Chorismate synthase from Chlamydia caviae (strain ATCC VR-813 / DSM 19441 / 03DC25 / GPIC) (Chlamydophila caviae).